The primary structure comprises 359 residues: Peptide chain release factor 1 (359 aa).

Position 235 is an N5-methylglutamine (Gln235).

It belongs to the prokaryotic/mitochondrial release factor family. In terms of processing, methylated by PrmC. Methylation increases the termination efficiency of RF1.

The protein resides in the cytoplasm. In terms of biological role, peptide chain release factor 1 directs the termination of translation in response to the peptide chain termination codons UAG and UAA. This chain is Peptide chain release factor 1, found in Nitrosomonas eutropha (strain DSM 101675 / C91 / Nm57).